Consider the following 1012-residue polypeptide: Retinoblastoma-related protein (1012 aa).

A domain A region spans residues 403-604; the sequence is TPVSTAMTTA…EKGSSMDNSL (202 aa). The pocket stretch occupies residues 403–863; it reads TPVSTAMTTA…NEVFIPSVKP (461 aa). Positions 605–723 are spacer; it reads IIARPALSAG…PGGGGETCAE (119 aa). The interval 724–863 is domain B; the sequence is TGINIFFSKI…NEVFIPSVKP (140 aa). Positions 884-905 are disordered; it reads NNDKDGQCPGSPKLSTFPSLPD.

The protein belongs to the retinoblastoma protein (RB) family.

The protein localises to the nucleus. Its function is as follows. Regulator of biological processes that recruits a histone deacetylase to control gene transcription. May play a role in the entry into mitosis, negatively regulating the cell proliferation. Formation of stable complexes with geminiviridae replication-associated proteins may create a cellular environment which favors viral DNA replication. The polypeptide is Retinoblastoma-related protein (RB) (Oxybasis rubra (Red goosefoot)).